Here is a 771-residue protein sequence, read N- to C-terminus: Probable glycosyltransferase STELLO1 (771 aa).

The disordered stretch occupies residues 1–23 (MLVQDRAAPSPAKPPKSQIRELP). Residues 1 to 50 (MLVQDRAAPSPAKPPKSQIRELPTHQQIRRRFSEPKNLDFSTWFSENLSR) lie on the Cytoplasmic side of the membrane. A helical membrane pass occupies residues 51–71 (IAVFSLLIVTIVAFFFLYNTT). The Lumenal segment spans residues 72-771 (DTASLLCFQS…EGDPLLMELV (700 aa)). N-linked (GlcNAc...) asparagine glycans are attached at residues Asn242 and Asn729.

This sequence belongs to the STELLO family. In terms of assembly, homo- and heterodimer with STL2. Interacts with CESA1, CESA3, CESA4, CESA6, CESA7 and CESA8, but not with GOT1. Expressed in cells that are expanding or producing secondary cell walls.

Its subcellular location is the golgi apparatus membrane. Functionally, probable glycosyltransferase regulating the assembly and trafficking of cellulose synthase complexes. The chain is Probable glycosyltransferase STELLO1 from Arabidopsis thaliana (Mouse-ear cress).